The following is a 136-amino-acid chain: Holo-[acyl-carrier-protein] synthase (136 aa).

Positions 8 and 57 each coordinate Mg(2+).

It belongs to the P-Pant transferase superfamily. AcpS family. The cofactor is Mg(2+).

Its subcellular location is the cytoplasm. The catalysed reaction is apo-[ACP] + CoA = holo-[ACP] + adenosine 3',5'-bisphosphate + H(+). Its function is as follows. Transfers the 4'-phosphopantetheine moiety from coenzyme A to a Ser of acyl-carrier-protein. In Methylorubrum extorquens (strain PA1) (Methylobacterium extorquens), this protein is Holo-[acyl-carrier-protein] synthase.